The following is a 512-amino-acid chain: Polyamine oxidase 1 (512 aa).

FAD is bound by residues Glu38 and Arg46. Residues 448-470 form a disordered region; it reads DRMAEPLPRGPDAAADERPPSPR. Glu476 contributes to the FAD binding site.

The protein belongs to the flavin monoamine oxidase family. Requires FAD as cofactor.

The protein localises to the cytoplasm. It catalyses the reaction spermine + O2 + H2O = 3-aminopropanal + spermidine + H2O2. The enzyme catalyses N(1)-acetylspermine + O2 + H2O = 3-acetamidopropanal + spermidine + H2O2. The catalysed reaction is norspermine + O2 + H2O = norspermidine + 3-aminopropanal + H2O2. It carries out the reaction thermospermine + O2 + H2O = 3-aminopropanal + spermidine + H2O2. It participates in amine and polyamine degradation; spermine degradation. Its function is as follows. Flavoenzyme involved in polyamine back-conversion. Catalyzes the oxidation of the secondary amino group of polyamines, such as spermine and its acetyl derivatives. Substrate preference is thermospermine &gt; spermine &gt; norspermine &gt; N(1)-acetylspermine. No activity detected when putrescine or spermidine are used as substrates. Plays an important role in the regulation of polyamine intracellular concentration. This Oryza sativa subsp. japonica (Rice) protein is Polyamine oxidase 1.